The chain runs to 1343 residues: uncharacterized protein (1343 aa).

A helical transmembrane segment spans residues 432–449 (LYVYFVTTKTGVVAFSLL).

This sequence belongs to the IIV-6 295L family.

It localises to the membrane. This is an uncharacterized protein from Acheta domesticus (House cricket).